Consider the following 351-residue polypeptide: Cell division protein FtsZ (351 aa).

Residues 31–35, 118–120, Glu149, Arg153, and Asp197 each bind GTP; these read GAGNN and GTG.

Belongs to the FtsZ family. As to quaternary structure, homodimer. Polymerizes to form a dynamic ring structure in a strictly GTP-dependent manner. Interacts directly with several other division proteins. Interacts with FtsA.

Its subcellular location is the cytoplasm. Functionally, essential cell division protein that forms a contractile ring structure (Z ring) at the future cell division site. The regulation of the ring assembly controls the timing and the location of cell division. One of the functions of the FtsZ ring is to recruit other cell division proteins to the septum to produce a new cell wall between the dividing cells. Binds GTP and shows GTPase activity. The polypeptide is Cell division protein FtsZ (Thermotoga maritima (strain ATCC 43589 / DSM 3109 / JCM 10099 / NBRC 100826 / MSB8)).